Here is a 178-residue protein sequence, read N- to C-terminus: GTP-dependent dephospho-CoA kinase (178 aa).

GTP contacts are provided by Asp-55, Val-57, Asp-74, Lys-76, and Glu-127.

The protein belongs to the GTP-dependent DPCK family.

It catalyses the reaction 3'-dephospho-CoA + GTP = GDP + CoA + H(+). It participates in cofactor biosynthesis; coenzyme A biosynthesis. Catalyzes the GTP-dependent phosphorylation of the 3'-hydroxyl group of dephosphocoenzyme A to form coenzyme A (CoA). In Saccharolobus islandicus (strain Y.N.15.51 / Yellowstone #2) (Sulfolobus islandicus), this protein is GTP-dependent dephospho-CoA kinase.